A 269-amino-acid polypeptide reads, in one-letter code: Protein CURLY FLAG LEAF 1 (269 aa).

Residues 17–44 (SLNGGGGGGGGRRRGRRAAAAEGSDDSE) are disordered. The short motif at 47–52 (TVELNS) is the EAR element. The WW domain maps to 54-88 (VALPYHWEQCLDIRTGQVYYINWEDGTRTTIDPRS). 2 disordered regions span residues 83-133 (TIDP…SGYT) and 174-218 (GDDE…SGAG). Composition is skewed to low complexity over residues 87-106 (RSSS…SSSR), 121-133 (AAAA…SGYT), and 180-202 (SSSS…AVSS). Residues 203–212 (TLSSFSPTDE) show a composition bias toward polar residues.

In terms of assembly, binds to HDG1.

Negatively regulates the cuticle development probably by interacting with the HD-ZIP IV transcription factor HDG1. This Oryza sativa subsp. indica (Rice) protein is Protein CURLY FLAG LEAF 1.